Consider the following 304-residue polypeptide: Olfactory receptor 4K13 (304 aa).

The Extracellular segment spans residues 1–25; the sequence is MERANHSVVSEFILLGLSKSQNLQI. N-linked (GlcNAc...) asparagine glycosylation occurs at Asn5. Residues 26-49 form a helical membrane-spanning segment; sequence LFFLGFSVVFVGIVLGNLLILVTV. Over 50–57 the chain is Cytoplasmic; that stretch reads TFDSLLHT. The chain crosses the membrane as a helical span at residues 58–79; sequence PMYFLLSNLSCIDMILASFATP. Residues 80–100 are Extracellular-facing; it reads KMIVDFLRERKTISWWGCYSQ. Cys97 and Cys189 form a disulfide bridge. The helical transmembrane segment at 101 to 120 threads the bilayer; the sequence is MFFMHLLGGSEMMLLVAMAI. Topologically, residues 121-139 are cytoplasmic; the sequence is DRYVAICKPLHYMTIMSPR. A helical transmembrane segment spans residues 140–158; sequence VLTGLLLSSYAVGFVHSSS. At 159–195 the chain is on the extracellular side; that stretch reads QMAFMLTLPFCGPNVIDSFFCDLPLVIKLACKDTYIL. The chain crosses the membrane as a helical span at residues 196 to 219; the sequence is QLLVIADSGLLSLVCFLLLLVSYG. Residues 220-235 are Cytoplasmic-facing; that stretch reads VIIFSVRYRAASRSSK. A helical transmembrane segment spans residues 236–258; that stretch reads AFSTLSAHITVVTLFFAPCVFIY. Topologically, residues 259-269 are extracellular; that stretch reads VWPFSRYSVDK. The helical transmembrane segment at 270–289 threads the bilayer; the sequence is ILSVFYTIFTPLLNPIIYTL. The Cytoplasmic segment spans residues 290–304; sequence RNQEVKAAIKKRLCI.

It belongs to the G-protein coupled receptor 1 family.

The protein resides in the cell membrane. Functionally, odorant receptor. The protein is Olfactory receptor 4K13 (OR4K13) of Homo sapiens (Human).